The primary structure comprises 352 residues: Molybdenum import ATP-binding protein ModC (352 aa).

An ABC transporter domain is found at 1-229 (MLELNFSQTL…SVMHPWLPKE (229 aa)). 31 to 38 (GVSGAGKT) provides a ligand contact to ATP. In terms of domain architecture, Mop spans 289 to 352 (QTSIRNVLRA…AQVKSVSITA (64 aa)).

It belongs to the ABC transporter superfamily. Molybdate importer (TC 3.A.1.8) family. In terms of assembly, the complex is composed of two ATP-binding proteins (ModC), two transmembrane proteins (ModB) and a solute-binding protein (ModA).

The protein resides in the cell inner membrane. The catalysed reaction is molybdate(out) + ATP + H2O = molybdate(in) + ADP + phosphate + H(+). In terms of biological role, part of the ABC transporter complex ModABC involved in molybdenum import. Responsible for energy coupling to the transport system. The polypeptide is Molybdenum import ATP-binding protein ModC (Salmonella paratyphi A (strain ATCC 9150 / SARB42)).